We begin with the raw amino-acid sequence, 499 residues long: Neuronal acetylcholine receptor subunit alpha-3 (499 aa).

A signal peptide spans 1-25; it reads MGVVLPPPPLSMLMLVLMLLPVASA. Over 26–244 the chain is Extracellular; that stretch reads SEAEHRLFQY…PLFYTINLII (219 aa). Residues N49 and N166 are each glycosylated (N-linked (GlcNAc...) asparagine). 2 cysteine pairs are disulfide-bonded: C153/C167 and C217/C218. The chain crosses the membrane as a helical span at residues 245–260; the sequence is PCLLISFLTVLVFYLP. The Cytoplasmic segment spans residues 261–262; it reads SD. A helical membrane pass occupies residues 263–279; that stretch reads CGEKVTLCISVLLSLTV. E265 is a Na(+) binding site. Over 280–301 the chain is Extracellular; that stretch reads FLLVITETIPSTSLVIPLIGEY. The chain crosses the membrane as a helical span at residues 302–320; sequence LLFTMIFVTLSIVITVFVL. The Cytoplasmic portion of the chain corresponds to 321–468; the sequence is NVHYRTPTTH…QDDWKYVAMV (148 aa). Residues S407 and S410 each carry the phosphoserine modification. The helical transmembrane segment at 469–487 threads the bilayer; sequence IDRIFLWVFILVCILGTAG. Residues 488-499 are Extracellular-facing; sequence LFLQPLMARDDT.

It belongs to the ligand-gated ion channel (TC 1.A.9) family. Acetylcholine receptor (TC 1.A.9.1) subfamily. Alpha-3/CHRNA3 sub-subfamily. As to quaternary structure, neuronal AChR is composed of two different types of subunits: alpha and beta. CHRNA3/Alpha-3 subunit can be combined to CHRNB2/beta-2 or CHRNB4/beta-4 to give rise to functional receptors. Part of a complex composed of STUB1/CHIP, VCP/p97, CHRNA3, and UBXN2A that modulates the ubiquitination and endoplasmic reticulum-associated degradation (ERAD) of CHRNA3. Within the complex UBXN2A acts as a scaffold protein required for the interaction of CHRNA3 with VCP/p97, this interaction also inhibits CHRNA3 ubiquitination by STUB1/CHIP and subsequently ERAD. Interacts with UBXN2A (via SEP domain), the interaction is required for the interaction of CHRNA3 in the STUB1:VCP:UBXN2A complex. Interacts with RIC3; which is required for proper folding and assembly. Interacts with LYPD6. Post-translationally, ubiquitinated; by STUB1/CHIP and thereafter degraded by the 26S proteosome complex. As to expression, expressed in the brain (at protein level).

The protein localises to the synaptic cell membrane. The protein resides in the cell membrane. It is found in the endoplasmic reticulum. It localises to the golgi apparatus. The catalysed reaction is K(+)(in) = K(+)(out). The enzyme catalyses Na(+)(in) = Na(+)(out). It carries out the reaction Ca(2+)(in) = Ca(2+)(out). Activated by a myriad of ligands such as acetylcholine, cytisine, nicotine, choline and epibatidine. The heteropentamer CHRNA3:CHRNB2 activity is blocked by alpha-conotoxins ImI, ImII, PnIA, GID and MII. The heteropentamer CHRNA3:CHRNB4 activity is blocked by the alpha-conotoxin ImI. In terms of biological role, component of neuronal acetylcholine receptors (nAChRs) that function as pentameric, ligand-gated cation channels with high calcium permeability among other activities. nAChRs are excitatory neurotrasnmitter receptors formed by a collection of nAChR subunits known to mediate synaptic transmission in the nervous system and the neuromuscular junction. Each nAchR subunit confers differential attributes to channel properties, including activation, deactivation and desensitization kinetics, pH sensitivity, cation permeability, and binding to allosteric modulators. CHRNA3 forms heteropentameric neuronal acetylcholine receptors with CHRNA5, CHRNB2 and CHRNB4. CHRNA3:CHRNB4 being predominant in neurons of the autonomic ganglia, it is known as ganglionic nicotinic receptor. CHRNA3:CHRNB4 or CHRNA3:CHRNA5:CHRNB4 play also an important role in the habenulo-interpeduncular tract, modulating the mesolimbic dopamine system and affecting reward circuits and addiction. Hypothalamic CHRNA3:CHRNB4 nAChR activation by nicotine leads to activation of POMC neurons and a decrease in food intake. Also expressed in the urothelium where it modulates reflex bladder activity by increasing intracellular calcium through extracellular influx and basal ATP release. This Mus musculus (Mouse) protein is Neuronal acetylcholine receptor subunit alpha-3 (Chrna3).